The chain runs to 160 residues: Oligoribonuclease (160 aa).

In terms of domain architecture, Exonuclease spans 8–158 (LIWIDLEMTG…YNKLKKKTLI (151 aa)). The active site involves Tyr129.

This sequence belongs to the oligoribonuclease family.

The protein localises to the cytoplasm. Functionally, 3'-to-5' exoribonuclease specific for small oligoribonucleotides. This is Oligoribonuclease (orn) from Buchnera aphidicola subsp. Baizongia pistaciae (strain Bp).